We begin with the raw amino-acid sequence, 455 residues long: uncharacterized protein (455 aa).

The N-terminal stretch at 1 to 27 (MSQRQQFQFLLSFLILIFLKFIIQIRC) is a signal peptide. Topologically, residues 29 to 434 (ESNGVIIIKN…GDDENLINSS (406 aa)) are extracellular. Residues N136, N148, N210, and N298 are each glycosylated (N-linked (GlcNAc...) asparagine). The interval 383–402 (SSSTTSTTSSSSSSSSSTTT) is disordered. N-linked (GlcNAc...) asparagine glycosylation is found at N421 and N432. Residues 435-455 (SVIKFSTPIIMIIIILINIKF) form a helical membrane-spanning segment.

The protein localises to the membrane. This is an uncharacterized protein from Dictyostelium discoideum (Social amoeba).